We begin with the raw amino-acid sequence, 414 residues long: Tryptophan synthase beta chain (414 aa).

The interval 1-26 is disordered; it reads MVSTFSRKNQNYKKDDLNQPSKDGRF. Basic and acidic residues predominate over residues 12–26; that stretch reads YKKDDLNQPSKDGRF. An N6-(pyridoxal phosphate)lysine modification is found at Lys-109.

The protein belongs to the TrpB family. In terms of assembly, tetramer of two alpha and two beta chains. Pyridoxal 5'-phosphate serves as cofactor.

The enzyme catalyses (1S,2R)-1-C-(indol-3-yl)glycerol 3-phosphate + L-serine = D-glyceraldehyde 3-phosphate + L-tryptophan + H2O. It participates in amino-acid biosynthesis; L-tryptophan biosynthesis; L-tryptophan from chorismate: step 5/5. Its function is as follows. The beta subunit is responsible for the synthesis of L-tryptophan from indole and L-serine. The polypeptide is Tryptophan synthase beta chain (Prochlorococcus marinus (strain MIT 9215)).